Consider the following 66-residue polypeptide: Large ribosomal subunit protein uL29 (66 aa).

This sequence belongs to the universal ribosomal protein uL29 family.

The polypeptide is Large ribosomal subunit protein uL29 (Rhizobium rhizogenes (strain K84 / ATCC BAA-868) (Agrobacterium radiobacter)).